A 247-amino-acid chain; its full sequence is Probable transcriptional regulatory protein ETA_14870 (247 aa).

Residues 1–20 are disordered; sequence MAGHSKWANTKHRKAAQDAK.

It belongs to the TACO1 family.

The protein localises to the cytoplasm. In Erwinia tasmaniensis (strain DSM 17950 / CFBP 7177 / CIP 109463 / NCPPB 4357 / Et1/99), this protein is Probable transcriptional regulatory protein ETA_14870.